We begin with the raw amino-acid sequence, 114 residues long: Fumarate reductase subunit D (114 aa).

Transmembrane regions (helical) follow at residues 24-44 (VSAI…PFGL), 50-70 (LITF…TIFP), and 92-112 (GGFI…FAVI).

Belongs to the FrdD family. As to quaternary structure, part of an enzyme complex containing four subunits: a flavoprotein (FrdA), an iron-sulfur protein (FrdB), and two hydrophobic anchor proteins (FrdC and FrdD).

It localises to the cell inner membrane. Functionally, anchors the catalytic components of the fumarate reductase complex to the cell membrane, binds quinones. The chain is Fumarate reductase subunit D from Haemophilus influenzae (strain PittGG).